We begin with the raw amino-acid sequence, 671 residues long: DNA ligase (671 aa).

Residues 32-36 (DAEYD), 81-82 (SL), and Glu-113 each bind NAD(+). Catalysis depends on Lys-115, which acts as the N6-AMP-lysine intermediate. NAD(+)-binding residues include Arg-136, Glu-173, Lys-290, and Lys-314. Zn(2+)-binding residues include Cys-408, Cys-411, Cys-426, and Cys-432. Positions 593-671 (EIDSPFAGKT…ETEMLRLLGS (79 aa)) constitute a BRCT domain.

The protein belongs to the NAD-dependent DNA ligase family. LigA subfamily. Mg(2+) serves as cofactor. The cofactor is Mn(2+).

The enzyme catalyses NAD(+) + (deoxyribonucleotide)n-3'-hydroxyl + 5'-phospho-(deoxyribonucleotide)m = (deoxyribonucleotide)n+m + AMP + beta-nicotinamide D-nucleotide.. DNA ligase that catalyzes the formation of phosphodiester linkages between 5'-phosphoryl and 3'-hydroxyl groups in double-stranded DNA using NAD as a coenzyme and as the energy source for the reaction. It is essential for DNA replication and repair of damaged DNA. The sequence is that of DNA ligase from Escherichia fergusonii (strain ATCC 35469 / DSM 13698 / CCUG 18766 / IAM 14443 / JCM 21226 / LMG 7866 / NBRC 102419 / NCTC 12128 / CDC 0568-73).